Consider the following 1577-residue polypeptide: Disco-interacting protein 2 homolog B-A (1577 aa).

Residues 7–124 enclose the DMAP1-binding domain; that stretch reads DLAALPKEVR…PMPTKRRSAF (118 aa). Disordered stretches follow at residues 109 to 148, 173 to 204, 217 to 239, and 253 to 273; these read EEKMALPMPTKRRSAFVQSPAENCTPPDTSSASEDEGSLR, VQGSSTSSSASSTLSHGDGKTHNHNNHSQGQT, DTNSSSGSVPPDVTSTAPQDRNS, and SRGQSRSSMMDTAGGVPAHSR. The span at 124 to 140 shows a compositional bias: polar residues; sequence FVQSPAENCTPPDTSSA. Positions 176–187 are enriched in low complexity; it reads SSTSSSASSTLS. Polar residues predominate over residues 217–236; the sequence is DTNSSSGSVPPDVTSTAPQD.

The protein belongs to the DIP2 family.

The protein localises to the cell projection. It localises to the dendrite. Its subcellular location is the axon. It is found in the perikaryon. Functionally, negatively regulates axonal outgrowth and is essential for normal synaptic transmission. Not required for regulation of axon polarity. Promotes acetylation of alpha-tubulin. The protein is Disco-interacting protein 2 homolog B-A (dip2ba) of Danio rerio (Zebrafish).